The primary structure comprises 331 residues: Endo-1,4-beta-xylanase 2 (331 aa).

Positions 1-17 are cleaved as a signal peptide; that stretch reads MKASSVLLGLAPLAALA. In terms of domain architecture, GH10 spans 31–329; that stretch reads QQSIDALMKA…KPAYNSVVQA (299 aa). Asparagine 105 carries an N-linked (GlcNAc...) asparagine glycan. Catalysis depends on glutamate 159, which acts as the Proton donor. Glutamate 266 (nucleophile) is an active-site residue. Cysteine 284 and cysteine 290 are oxidised to a cystine. The N-linked (GlcNAc...) asparagine glycan is linked to asparagine 301.

The protein belongs to the glycosyl hydrolase 10 (cellulase F) family.

It is found in the secreted. The catalysed reaction is Endohydrolysis of (1-&gt;4)-beta-D-xylosidic linkages in xylans.. The protein operates within glycan degradation; xylan degradation. Its function is as follows. Endo-1,4-beta-xylanase involved in the hydrolysis of xylan, a major structural heterogeneous polysaccharide found in plant biomass representing the second most abundant polysaccharide in the biosphere, after cellulose. Accounts for approximately 70 percent of the endoxylanase activity in the culture filtrate. The protein is Endo-1,4-beta-xylanase 2 (XYL2) of Pyricularia grisea (Crabgrass-specific blast fungus).